Consider the following 138-residue polypeptide: ATP synthase epsilon chain, chloroplastic (138 aa).

It belongs to the ATPase epsilon chain family. F-type ATPases have 2 components, CF(1) - the catalytic core - and CF(0) - the membrane proton channel. CF(1) has five subunits: alpha(3), beta(3), gamma(1), delta(1), epsilon(1). CF(0) has three main subunits: a, b and c.

The protein resides in the plastid. It is found in the chloroplast thylakoid membrane. Produces ATP from ADP in the presence of a proton gradient across the membrane. This chain is ATP synthase epsilon chain, chloroplastic, found in Staurastrum punctulatum (Green alga).